The primary structure comprises 95 residues: Putative protein RDUR (95 aa).

Positions 1–12 (MNNSFNKEDRMS) are enriched in basic and acidic residues. The disordered stretch occupies residues 1 to 20 (MNNSFNKEDRMSSDTMVGSC).

Functionally, could play a role in innate immunity against viruses. The protein is Putative protein RDUR of Homo sapiens (Human).